Reading from the N-terminus, the 154-residue chain is uncharacterized protein (154 aa).

In terms of biological role, this protein may be involved in virus assembly. Essential for virus function. This is an uncharacterized protein from Saccharolobus solfataricus (Sulfolobus solfataricus).